Reading from the N-terminus, the 93-residue chain is Large ribosomal subunit protein uL23cz/uL23cy (93 aa).

It belongs to the universal ribosomal protein uL23 family. Part of the 50S ribosomal subunit.

Its subcellular location is the plastid. It localises to the chloroplast. In terms of biological role, binds to 23S rRNA. The polypeptide is Large ribosomal subunit protein uL23cz/uL23cy (rpl23-A) (Cucumis sativus (Cucumber)).